A 141-amino-acid polypeptide reads, in one-letter code: MAKKVENIVKLQIPAGKATPAPPVGPALGQAGINIMGFTKEFNARTADQAGMIIPVVISVYEDKSFDFVTKTPPAAVLLKKAAGVDKGSGEPNKTKVASVTRAQVQEIAETKMPDLNAANLESAMRMIEGTARSMGFTVTD.

Belongs to the universal ribosomal protein uL11 family. Part of the ribosomal stalk of the 50S ribosomal subunit. Interacts with L10 and the large rRNA to form the base of the stalk. L10 forms an elongated spine to which L12 dimers bind in a sequential fashion forming a multimeric L10(L12)X complex. In terms of processing, one or more lysine residues are methylated.

Functionally, forms part of the ribosomal stalk which helps the ribosome interact with GTP-bound translation factors. This Streptococcus mutans serotype c (strain ATCC 700610 / UA159) protein is Large ribosomal subunit protein uL11.